The primary structure comprises 202 residues: Nucleoside triphosphate pyrophosphatase (202 aa).

Asp-79 acts as the Proton acceptor in catalysis.

The protein belongs to the Maf family. It depends on a divalent metal cation as a cofactor.

Its subcellular location is the cytoplasm. It carries out the reaction a ribonucleoside 5'-triphosphate + H2O = a ribonucleoside 5'-phosphate + diphosphate + H(+). It catalyses the reaction a 2'-deoxyribonucleoside 5'-triphosphate + H2O = a 2'-deoxyribonucleoside 5'-phosphate + diphosphate + H(+). Nucleoside triphosphate pyrophosphatase. May have a dual role in cell division arrest and in preventing the incorporation of modified nucleotides into cellular nucleic acids. This Nitrobacter hamburgensis (strain DSM 10229 / NCIMB 13809 / X14) protein is Nucleoside triphosphate pyrophosphatase.